A 218-amino-acid polypeptide reads, in one-letter code: MERSFTLAPSLLSADFSALDRALVYLEAHGAQWVHLDVMDGHFVPNLTFGAPVLRCLRSKTHLPFDVHLMVSRPADLIEDFVQAGADFLTFHIEAEVHAHRLIHAIRGRGVKVGISLVPSTPVAALSEVLPFVDLVLVMTVNPGFSGQQMIAHCLSKVSALVQMRTERGYSYMISVDGGIDCRTLPQALDAGADVIVSGSAFFSGTLRSLLCKDSSGA.

A substrate-binding site is contributed by serine 10. A divalent metal cation is bound by residues histidine 35, aspartate 37, and histidine 68. Catalysis depends on aspartate 37, which acts as the Proton acceptor. Residues histidine 68, 144-147 (GFSG), 177-179 (DGG), and 199-200 (GS) each bind substrate. Aspartate 177 contributes to the a divalent metal cation binding site. Aspartate 177 acts as the Proton donor in catalysis.

The protein belongs to the ribulose-phosphate 3-epimerase family. The cofactor is a divalent metal cation.

The enzyme catalyses D-ribulose 5-phosphate = D-xylulose 5-phosphate. It functions in the pathway carbohydrate degradation. Catalyzes the reversible epimerization of D-ribulose 5-phosphate to D-xylulose 5-phosphate. The protein is Ribulose-phosphate 3-epimerase of Treponema pallidum (strain Nichols).